The primary structure comprises 208 residues: Putative dioxygenase RC0543 (208 aa).

Belongs to the intradiol ring-cleavage dioxygenase family.

The polypeptide is Putative dioxygenase RC0543 (Rickettsia conorii (strain ATCC VR-613 / Malish 7)).